The chain runs to 88 residues: Small ribosomal subunit protein bS16c (88 aa).

It belongs to the bacterial ribosomal protein bS16 family.

Its subcellular location is the plastid. The protein localises to the chloroplast. This chain is Small ribosomal subunit protein bS16c, found in Gossypium barbadense (Sea Island cotton).